Reading from the N-terminus, the 119-residue chain is MRIALIAHDKKKQDIIEFAKRNKETLEKYELLATGTTGKMISEETGLNIKRYLSGPYGGDQQIGGRIAEGTIGLVIFFRDPLTAQPHEPDVSALLRVCDVHNIPVVTNSGTADLIIRQF.

Residues 1 to 119 form the MGS-like domain; that stretch reads MRIALIAHDK…GTADLIIRQF (119 aa). Residues His-8, Lys-12, 34–37, and 54–55 each bind substrate; these read TGTT and SG. Catalysis depends on Asp-60, which acts as the Proton donor/acceptor. His-87 is a substrate binding site.

This sequence belongs to the methylglyoxal synthase family.

It carries out the reaction dihydroxyacetone phosphate = methylglyoxal + phosphate. Functionally, catalyzes the formation of methylglyoxal from dihydroxyacetone phosphate. This chain is Methylglyoxal synthase, found in Clostridium botulinum (strain Alaska E43 / Type E3).